The chain runs to 45 residues: Amphipathic peptide Hj0164 (45 aa).

The signal sequence occupies residues 1–23 (MKSQAFFLLFLVVLLLATTQSEA). Phenylalanine 33 is subject to Phenylalanine amide. Positions 37–45 (SLRDVDTMK) are excised as a propeptide.

This sequence belongs to the non-disulfide-bridged peptide (NDBP) superfamily. Short antimicrobial peptide (group 4) family. Expressed by the venom gland.

The protein localises to the secreted. It is found in the target cell membrane. Functionally, amphipathic peptide that shows antibacterial activities. The protein is Amphipathic peptide Hj0164 of Hottentotta judaicus (Black scorpion).